We begin with the raw amino-acid sequence, 301 residues long: E3 ubiquitin-protein ligase DIS1 (301 aa).

The RING-type; degenerate zinc-finger motif lies at 53–89; it reads CPVCLSAMYPPIHQCSNGHTLCSGCKPRVHNRCPTCR. The segment at 106–166 adopts an SIAH-type; degenerate zinc-finger fold; that stretch reads SLELPCKYQN…LVNHLKDDHK (61 aa).

It belongs to the SINA (Seven in absentia) family. As to quaternary structure, homodimer. Interacts with NEK6. Interacts with SKIPA.

It localises to the nucleus. The protein localises to the cytoplasm. The catalysed reaction is S-ubiquitinyl-[E2 ubiquitin-conjugating enzyme]-L-cysteine + [acceptor protein]-L-lysine = [E2 ubiquitin-conjugating enzyme]-L-cysteine + N(6)-ubiquitinyl-[acceptor protein]-L-lysine.. The protein operates within protein modification; protein ubiquitination. Functionally, E3 ubiquitin-protein ligase that mediates ubiquitination and subsequent proteasomal degradation of target proteins. E3 ubiquitin ligases accept ubiquitin from an E2 ubiquitin-conjugating enzyme in the form of a thioester and then directly transfers the ubiquitin to targeted substrates. Plays a negative role in drought stress tolerance through transcriptional and post-translational regulation of diverse stress-related genes. Interacts with the serine/threonine-protein kinase NEK6 and promotes its degradation via the 26S proteasome-dependent pathway. This chain is E3 ubiquitin-protein ligase DIS1, found in Oryza sativa subsp. japonica (Rice).